A 251-amino-acid polypeptide reads, in one-letter code: MRKPIIAGNWKMNKTLSEAVSFVEEVKGQIPAASAVDAVVCSPALFLERLVAATEGTDLQVGAQNMHFEKNGAFTGEISPVALSDLKVGYVVLGHSERREMFAETDESVNKKTIAAFEHGLTPIVCCGETLEERESGKTFDLVAGQVTKALAGLTEEQVKATVIAYEPIWAIGTGKSSSSADANEVCAHIRKVVAEAVSPAAAEAVRIQYGGSVKPENIKEYMAQSDIDGALVGGASLEPASFLGLLGAVK.

Position 9 to 11 (9 to 11 (NWK)) interacts with substrate. The active-site Electrophile is the histidine 95. The active-site Proton acceptor is glutamate 167. Residues glycine 173, serine 213, and 234–235 (GG) contribute to the substrate site. Serine 213 carries the post-translational modification Phosphoserine.

The protein belongs to the triosephosphate isomerase family. Homodimer.

The protein resides in the cytoplasm. The enzyme catalyses D-glyceraldehyde 3-phosphate = dihydroxyacetone phosphate. It participates in carbohydrate biosynthesis; gluconeogenesis. The protein operates within carbohydrate degradation; glycolysis; D-glyceraldehyde 3-phosphate from glycerone phosphate: step 1/1. Involved in the gluconeogenesis. Catalyzes stereospecifically the conversion of dihydroxyacetone phosphate (DHAP) to D-glyceraldehyde-3-phosphate (G3P). The chain is Triosephosphate isomerase from Bacillus cereus (strain AH820).